The primary structure comprises 76 residues: DNA-directed RNA polymerase subunit epsilon (76 aa).

Belongs to the RNA polymerase subunit epsilon family. In terms of assembly, RNAP is composed of a core of 2 alpha, a beta and a beta' subunit. The core is associated with a delta subunit, and at least one of epsilon or omega. When a sigma factor is associated with the core the holoenzyme is formed, which can initiate transcription.

It catalyses the reaction RNA(n) + a ribonucleoside 5'-triphosphate = RNA(n+1) + diphosphate. Functionally, a non-essential component of RNA polymerase (RNAP). In Streptococcus pyogenes serotype M1, this protein is DNA-directed RNA polymerase subunit epsilon.